The sequence spans 117 residues: Histone H1-like protein HC1 (117 aa).

A disordered region spans residues 57–117 (EKSGLMTRKP…KSSKSRYLRK (61 aa)). A compositionally biased stretch (basic residues) spans 66 to 81 (PATKAKKAAATKKAAP). The span at 82–94 (KPKIQAKAAPKAK) shows a compositional bias: low complexity. Over residues 95–117 (ATTKKTPAKAKAKKSSKSRYLRK) the composition is skewed to basic residues.

Belongs to the histone H1/H5 family. HCT subfamily.

Might have a role analogous to that of eukaryotic histone proteins. This is Histone H1-like protein HC1 (hctA) from Chlamydia psittaci (Chlamydophila psittaci).